Reading from the N-terminus, the 115-residue chain is Large ribosomal subunit protein bL20 (115 aa).

It belongs to the bacterial ribosomal protein bL20 family.

Functionally, binds directly to 23S ribosomal RNA and is necessary for the in vitro assembly process of the 50S ribosomal subunit. It is not involved in the protein synthesizing functions of that subunit. This Synechococcus sp. (strain WH7803) protein is Large ribosomal subunit protein bL20.